We begin with the raw amino-acid sequence, 122 residues long: Large ribosomal subunit protein bL19 (122 aa).

It belongs to the bacterial ribosomal protein bL19 family.

This protein is located at the 30S-50S ribosomal subunit interface and may play a role in the structure and function of the aminoacyl-tRNA binding site. The sequence is that of Large ribosomal subunit protein bL19 from Chlamydia felis (strain Fe/C-56) (Chlamydophila felis).